An 803-amino-acid chain; its full sequence is Mastermind-like domain-containing protein 1 (803 aa).

4 disordered regions span residues 22–50 (NRQE…TGMA), 292–374 (LAAS…APSS), 420–452 (GHLI…QQSF), and 486–641 (QQQQ…PDQS). Residues 296–309 (KQGSATKQGSNRNW) are compositionally biased toward polar residues. Residues 312 to 340 (LPPPGLSPPYLPVPSPHPPPPQPPPPPFS) show a composition bias toward pro residues. A compositionally biased stretch (low complexity) spans 347 to 362 (SCMSSSSLSGSAVQSS). Composition is skewed to polar residues over residues 363–374 (PNALLSSMAPSS), 441–452 (NLSSPGLPQQSF), 495–526 (HQAN…SSSP), and 547–564 (PSPQ…QSSL). The segment covering 571–588 (ATPAHAPSATASSTATAT) has biased composition (low complexity). Basic residues predominate over residues 592–622 (QHHHQQHHHQQHHHQQQHHQQQHHQQHHHQQ). The segment covering 623 to 641 (QQHQQQQHQQQQQQQPDQS) has biased composition (low complexity).

This sequence belongs to the mastermind family.

The protein resides in the nucleus. In terms of biological role, transactivates the HES3 promoter independently of NOTCH proteins. HES3 is a non-canonical NOTCH target gene which lacks binding sites for RBPJ. Required for testosterone production. This is Mastermind-like domain-containing protein 1 (Mamld1) from Mus musculus (Mouse).